The sequence spans 418 residues: UDP-N-acetylglucosamine 1-carboxyvinyltransferase (418 aa).

Position 22–23 (22–23) interacts with phosphoenolpyruvate; sequence KN. Residue Arg-92 participates in UDP-N-acetyl-alpha-D-glucosamine binding. Cys-116 (proton donor) is an active-site residue. At Cys-116 the chain carries 2-(S-cysteinyl)pyruvic acid O-phosphothioketal. UDP-N-acetyl-alpha-D-glucosamine contacts are provided by residues 121–125, Asp-305, and Leu-327; that span reads RPIDL.

It belongs to the EPSP synthase family. MurA subfamily.

The protein resides in the cytoplasm. The enzyme catalyses phosphoenolpyruvate + UDP-N-acetyl-alpha-D-glucosamine = UDP-N-acetyl-3-O-(1-carboxyvinyl)-alpha-D-glucosamine + phosphate. Its pathway is cell wall biogenesis; peptidoglycan biosynthesis. In terms of biological role, cell wall formation. Adds enolpyruvyl to UDP-N-acetylglucosamine. In Campylobacter jejuni subsp. jejuni serotype O:6 (strain 81116 / NCTC 11828), this protein is UDP-N-acetylglucosamine 1-carboxyvinyltransferase.